We begin with the raw amino-acid sequence, 80 residues long: Conotoxin SmIVA (80 aa).

A signal peptide spans 1 to 21; it reads MGMRMMFTVFLLVVLATTVVS. A propeptide spanning residues 22–38 is cleaved from the precursor; the sequence is IPSDRASDGRNAAVNER. Position 39 is a pyrrolidone carboxylic acid (Gln-39). Ser-45 is a glycosylation site (O-linked (HexNAc...) serine). 4-hydroxyproline is present on residues Pro-55, Pro-60, Pro-70, and Pro-72. At Ser-75 the chain carries Serine amide. The propeptide occupies 76–80; that stretch reads GRRND.

The protein belongs to the conotoxin A superfamily. In terms of processing, contains 3 disulfide bonds. In terms of tissue distribution, expressed by the venom duct.

It is found in the secreted. Neurotoxin with probable activity on sodium channel. Induces intense repetitive firing of the frog neuromuscular junction, leading to a tetanic contracture in muscle fiber (spastic paralysis). In vivo, shows the same effect as the whole venom when injected on fish prey. The protein is Conotoxin SmIVA of Conus stercusmuscarum (Fly-specked cone).